We begin with the raw amino-acid sequence, 912 residues long: Translation initiation factor IF-2 (912 aa).

Residues 26 to 297 (SDQGEFVKSA…RGRKSKRAKR (272 aa)) are disordered. Over residues 56-74 (KPAPAASNGAAAEAAAPPK) the composition is skewed to low complexity. Pro residues predominate over residues 100–120 (APEPPAAPAAPAAPAPKPSPA). Low complexity predominate over residues 121–131 (ARPAAAEAAAP). Pro residues-rich tracts occupy residues 132 to 152 (APAP…PGAP), 173 to 183 (PRPQAPRPGAP), and 192 to 218 (NMPP…PGGG). The span at 219 to 283 (PRPGGAGRPG…GAAGAFGRPG (65 aa)) shows a compositional bias: gly residues. The span at 287-296 (KRGRKSKRAK) shows a compositional bias: basic residues. The 172-residue stretch at 408-579 (TRPPVVTVMG…AVLLTADAAL (172 aa)) folds into the tr-type G domain. Residues 417-424 (GHVDHGKT) form a G1 region. Position 417–424 (417–424 (GHVDHGKT)) interacts with GTP. The tract at residues 442-446 (GITQH) is G2. The G3 stretch occupies residues 467–470 (DTPG). Residues 467-471 (DTPGH) and 521-524 (NKID) contribute to the GTP site. A G4 region spans residues 521–524 (NKID). The tract at residues 557 to 559 (SAR) is G5.

This sequence belongs to the TRAFAC class translation factor GTPase superfamily. Classic translation factor GTPase family. IF-2 subfamily.

Its subcellular location is the cytoplasm. In terms of biological role, one of the essential components for the initiation of protein synthesis. Protects formylmethionyl-tRNA from spontaneous hydrolysis and promotes its binding to the 30S ribosomal subunits. Also involved in the hydrolysis of GTP during the formation of the 70S ribosomal complex. The chain is Translation initiation factor IF-2 from Mycobacteroides abscessus (strain ATCC 19977 / DSM 44196 / CCUG 20993 / CIP 104536 / JCM 13569 / NCTC 13031 / TMC 1543 / L948) (Mycobacterium abscessus).